The following is a 660-amino-acid chain: tRNA 5-methylaminomethyl-2-thiouridine biosynthesis bifunctional protein MnmC (660 aa).

The segment at 1 to 235 (MTITRHARID…KWEVLRGAFI (235 aa)) is tRNA (mnm(5)s(2)U34)-methyltransferase. Residues 266–660 (IGAGLAGCAT…LRGLIRGGGK (395 aa)) are FAD-dependent cmnm(5)s(2)U34 oxidoreductase.

This sequence in the N-terminal section; belongs to the methyltransferase superfamily. tRNA (mnm(5)s(2)U34)-methyltransferase family. In the C-terminal section; belongs to the DAO family. The cofactor is FAD.

It is found in the cytoplasm. It carries out the reaction 5-aminomethyl-2-thiouridine(34) in tRNA + S-adenosyl-L-methionine = 5-methylaminomethyl-2-thiouridine(34) in tRNA + S-adenosyl-L-homocysteine + H(+). Catalyzes the last two steps in the biosynthesis of 5-methylaminomethyl-2-thiouridine (mnm(5)s(2)U) at the wobble position (U34) in tRNA. Catalyzes the FAD-dependent demodification of cmnm(5)s(2)U34 to nm(5)s(2)U34, followed by the transfer of a methyl group from S-adenosyl-L-methionine to nm(5)s(2)U34, to form mnm(5)s(2)U34. This Pseudomonas syringae pv. tomato (strain ATCC BAA-871 / DC3000) protein is tRNA 5-methylaminomethyl-2-thiouridine biosynthesis bifunctional protein MnmC.